Here is a 173-residue protein sequence, read N- to C-terminus: Alpha-crystallin A chain (173 aa).

Met-1 bears the N-acetylmethionine mark. Positions 1 to 63 (MDITIQHPWF…RTVLESGISE (63 aa)) are required for complex formation with BFSP1 and BFSP2. Gln-6 is modified (deamidated glutamine; partial). Ser-45 carries the post-translational modification Phosphoserine. Gln-50 bears the Deamidated glutamine; partial mark. The 113-residue stretch at 52–164 (LFRTVLESGI…SDRSIPVSRE (113 aa)) folds into the sHSP domain. Lys-70 and Lys-99 each carry N6-acetyllysine. Zn(2+)-binding residues include His-100, Glu-102, and His-107. Residue Ser-122 is modified to Phosphoserine. Residue Asn-123 is modified to Deamidated asparagine; partial. Basic and acidic residues predominate over residues 146–167 (IHSDMDASHSDRSIPVSREEKP). The interval 146–173 (IHSDMDASHSDRSIPVSREEKPTLAPSS) is disordered. Residue His-154 participates in Zn(2+) binding. Residue Ser-162 is glycosylated (O-linked (GlcNAc) serine).

This sequence belongs to the small heat shock protein (HSP20) family. Heteromer composed of three CRYAA and one CRYAB subunits. Inter-subunit bridging via zinc ions enhances stability, which is crucial as there is no protein turn over in the lens. Can also form homodimers and homotetramers (dimers of dimers) which serve as the building blocks of homooligomers. Within homooligomers, the zinc-binding motif is created from residues of 3 different molecules. His-100 and Glu-102 from one molecule are ligands of the zinc ion, and His-107 and His-154 residues from additional molecules complete the site with tetrahedral coordination geometry. Part of a complex required for lens intermediate filament formation composed of BFSP1, BFSP2 and CRYAA. In terms of processing, acetylation at Lys-70 may increase chaperone activity. Undergoes age-dependent proteolytical cleavage at the C-terminus.

The protein localises to the cytoplasm. The protein resides in the nucleus. In terms of biological role, contributes to the transparency and refractive index of the lens. Acts as a chaperone, preventing aggregation of various proteins under a wide range of stress conditions. Required for the correct formation of lens intermediate filaments as part of a complex composed of BFSP1, BFSP2 and CRYAA. The chain is Alpha-crystallin A chain (CRYAA) from Osphranter rufus (Red kangaroo).